An 80-amino-acid chain; its full sequence is Small ribosomal subunit protein uS17 (80 aa).

The protein belongs to the universal ribosomal protein uS17 family. Part of the 30S ribosomal subunit.

Its function is as follows. One of the primary rRNA binding proteins, it binds specifically to the 5'-end of 16S ribosomal RNA. The sequence is that of Small ribosomal subunit protein uS17 from Beijerinckia indica subsp. indica (strain ATCC 9039 / DSM 1715 / NCIMB 8712).